The sequence spans 523 residues: uncharacterized protein (523 aa).

The transit peptide at 1 to 63 directs the protein to the chloroplast; the sequence is MACVSTCLIL…NRHGIAVVKA (63 aa). Helical transmembrane passes span 180–200, 386–406, and 423–443; these read VSFG…IIAL, ALVI…NTLL, and IYPL…IRWF.

Its subcellular location is the plastid. It is found in the chloroplast membrane. This is an uncharacterized protein from Arabidopsis thaliana (Mouse-ear cress).